The primary structure comprises 360 residues: Phenylalanine--tRNA ligase alpha subunit (360 aa).

A Mg(2+)-binding site is contributed by E260.

This sequence belongs to the class-II aminoacyl-tRNA synthetase family. Phe-tRNA synthetase alpha subunit type 1 subfamily. In terms of assembly, tetramer of two alpha and two beta subunits. It depends on Mg(2+) as a cofactor.

It is found in the cytoplasm. It catalyses the reaction tRNA(Phe) + L-phenylalanine + ATP = L-phenylalanyl-tRNA(Phe) + AMP + diphosphate + H(+). In Rhizobium rhizogenes (strain K84 / ATCC BAA-868) (Agrobacterium radiobacter), this protein is Phenylalanine--tRNA ligase alpha subunit.